A 447-amino-acid chain; its full sequence is MNAWEVNFDGLVGLTHHYAGLSFGNEASTRHRFQVSNPRLAAKQGLLKMKALADAGFPQAVIPPHERPFIPVLRQLGFSGSDEQVLEKVARQAPHWLSSVSSASPMWVANAATIAPSADTLDGKVHLTVANLNNKFHRSLEAPVTESLLKAIFNDEEKFSVHSALPQVALLGDEGAANHNRLGGHYGEPGMQLFVYGREEGNDTLPSRYPARQTREASEAVARLNQVNPQQVIFAQQNPDVIDQGVFHNDVIAVSNRQVLFCHQQAFARQSQLLANLRARVNGFMAIEVPATQVSVSDAVSTYLFNSQLLSRDDGSMVLVLPQECREHAGVWCYLNELLAADNPISELKVFDLRESMANGGGPACLRLRVVLTQEERRAVNPAVMMNDTLFNALNDWVDRYYRDRLTAADLADPQLLREGREALDVLSQLLNLGSVYPFQREGGGNG.

Substrate contacts are provided by residues 19–28 (AGLSFGNEAS), Asn-110, and 137–138 (HR). Glu-174 is a catalytic residue. Residue Arg-212 participates in substrate binding. Residue His-248 is part of the active site. 2 residues coordinate substrate: Asp-250 and Asn-359. Cys-365 acts as the Nucleophile in catalysis.

The protein belongs to the succinylarginine dihydrolase family. As to quaternary structure, homodimer.

The enzyme catalyses N(2)-succinyl-L-arginine + 2 H2O + 2 H(+) = N(2)-succinyl-L-ornithine + 2 NH4(+) + CO2. It functions in the pathway amino-acid degradation; L-arginine degradation via AST pathway; L-glutamate and succinate from L-arginine: step 2/5. Catalyzes the hydrolysis of N(2)-succinylarginine into N(2)-succinylornithine, ammonia and CO(2). In Escherichia coli (strain ATCC 8739 / DSM 1576 / NBRC 3972 / NCIMB 8545 / WDCM 00012 / Crooks), this protein is N-succinylarginine dihydrolase.